Reading from the N-terminus, the 317-residue chain is Protein CbxX, plasmid (317 aa).

ATP is bound at residue 85 to 92 (GNPGTGKT).

It belongs to the CbxX/CfxQ family.

Functionally, seems to be necessary for the expression of RuBisCO. This chain is Protein CbxX, plasmid (cbxXP), found in Cupriavidus necator (strain ATCC 17699 / DSM 428 / KCTC 22496 / NCIMB 10442 / H16 / Stanier 337) (Ralstonia eutropha).